We begin with the raw amino-acid sequence, 130 residues long: Small ribosomal subunit protein uS11 (130 aa).

The protein belongs to the universal ribosomal protein uS11 family. As to quaternary structure, part of the 30S ribosomal subunit. Interacts with proteins S7 and S18. Binds to IF-3.

Located on the platform of the 30S subunit, it bridges several disparate RNA helices of the 16S rRNA. Forms part of the Shine-Dalgarno cleft in the 70S ribosome. The chain is Small ribosomal subunit protein uS11 from Shewanella halifaxensis (strain HAW-EB4).